The chain runs to 412 residues: Phosphoglycerate kinase (412 aa).

Substrate-binding positions include 24–26 (DLN), Arg40, 63–66 (HLGR), Arg122, and Arg162. ATP is bound by residues Lys212, Gly300, Glu331, and 360 to 363 (GGDS).

Belongs to the phosphoglycerate kinase family. As to quaternary structure, monomer.

The protein resides in the cytoplasm. The enzyme catalyses (2R)-3-phosphoglycerate + ATP = (2R)-3-phospho-glyceroyl phosphate + ADP. The protein operates within carbohydrate degradation; glycolysis; pyruvate from D-glyceraldehyde 3-phosphate: step 2/5. This chain is Phosphoglycerate kinase (pgk), found in Mycobacterium bovis (strain ATCC BAA-935 / AF2122/97).